We begin with the raw amino-acid sequence, 449 residues long: NADH-quinone oxidoreductase subunit H (449 aa).

The next 9 helical transmembrane spans lie at 29 to 49, 96 to 116, 136 to 156, 177 to 197, 211 to 231, 259 to 279, 298 to 318, 330 to 350, and 365 to 385; these read ILLK…FAIV, PIFI…FAVI, LPVS…GLIL, IISY…YAGT, WYIV…GETN, FFFL…TTLF, WVPL…FIWL, FMSF…LAVA, and WLVG…IDPG. The span at 393–402 shows a compositional bias: basic and acidic residues; sequence LEEAEQRKLA. The interval 393 to 449 is disordered; it reads LEEAEQRKLAEAPSLDRIPWPPPPQAAGRGRPAVSAGASANGSSTVIPADPGPRQER. Residues 418 to 436 are compositionally biased toward low complexity; it reads AAGRGRPAVSAGASANGSS.

It belongs to the complex I subunit 1 family. NDH-1 is composed of 14 different subunits. Subunits NuoA, H, J, K, L, M, N constitute the membrane sector of the complex.

The protein localises to the cell membrane. The enzyme catalyses a quinone + NADH + 5 H(+)(in) = a quinol + NAD(+) + 4 H(+)(out). Functionally, NDH-1 shuttles electrons from NADH, via FMN and iron-sulfur (Fe-S) centers, to quinones in the respiratory chain. The immediate electron acceptor for the enzyme in this species is believed to be ubiquinone. Couples the redox reaction to proton translocation (for every two electrons transferred, four hydrogen ions are translocated across the cytoplasmic membrane), and thus conserves the redox energy in a proton gradient. This subunit may bind ubiquinone. The sequence is that of NADH-quinone oxidoreductase subunit H from Frankia casuarinae (strain DSM 45818 / CECT 9043 / HFP020203 / CcI3).